We begin with the raw amino-acid sequence, 489 residues long: Protein nucleotidyltransferase YdiU (489 aa).

G88, G90, R91, K111, D123, G124, R174, and R181 together coordinate ATP. D250 (proton acceptor) is an active-site residue. Positions 251 and 260 each coordinate Mg(2+). Residue D260 coordinates ATP.

This sequence belongs to the SELO family. Requires Mg(2+) as cofactor. Mn(2+) is required as a cofactor.

The enzyme catalyses L-seryl-[protein] + ATP = 3-O-(5'-adenylyl)-L-seryl-[protein] + diphosphate. It catalyses the reaction L-threonyl-[protein] + ATP = 3-O-(5'-adenylyl)-L-threonyl-[protein] + diphosphate. The catalysed reaction is L-tyrosyl-[protein] + ATP = O-(5'-adenylyl)-L-tyrosyl-[protein] + diphosphate. It carries out the reaction L-histidyl-[protein] + UTP = N(tele)-(5'-uridylyl)-L-histidyl-[protein] + diphosphate. The enzyme catalyses L-seryl-[protein] + UTP = O-(5'-uridylyl)-L-seryl-[protein] + diphosphate. It catalyses the reaction L-tyrosyl-[protein] + UTP = O-(5'-uridylyl)-L-tyrosyl-[protein] + diphosphate. Its function is as follows. Nucleotidyltransferase involved in the post-translational modification of proteins. It can catalyze the addition of adenosine monophosphate (AMP) or uridine monophosphate (UMP) to a protein, resulting in modifications known as AMPylation and UMPylation. This Vibrio parahaemolyticus serotype O3:K6 (strain RIMD 2210633) protein is Protein nucleotidyltransferase YdiU.